Here is a 58-residue protein sequence, read N- to C-terminus: MAFDKKLLEIVACPVCKGKLDYDKESQQLICKFDKLAYPITEGIPVLLENRATAIVTE.

The protein belongs to the UPF0434 family.

The chain is UPF0434 protein Sfri_2386 from Shewanella frigidimarina (strain NCIMB 400).